Reading from the N-terminus, the 609-residue chain is uncharacterized protein (609 aa).

The protein belongs to the NodU/CmcH family.

This is an uncharacterized protein from Methanocaldococcus jannaschii (strain ATCC 43067 / DSM 2661 / JAL-1 / JCM 10045 / NBRC 100440) (Methanococcus jannaschii).